A 212-amino-acid polypeptide reads, in one-letter code: Ribonuclease HII (212 aa).

Residues 1–199 (MIGGIDEAGR…VGGRIGLGRN (199 aa)) enclose the RNase H type-2 domain. Residues D6, E7, and D101 each contribute to the a divalent metal cation site.

It belongs to the RNase HII family. Mn(2+) is required as a cofactor. It depends on Mg(2+) as a cofactor.

It is found in the cytoplasm. It catalyses the reaction Endonucleolytic cleavage to 5'-phosphomonoester.. Endonuclease that specifically degrades the RNA of RNA-DNA hybrids. The polypeptide is Ribonuclease HII (Pyrobaculum aerophilum (strain ATCC 51768 / DSM 7523 / JCM 9630 / CIP 104966 / NBRC 100827 / IM2)).